We begin with the raw amino-acid sequence, 995 residues long: Secreted protein CSS1 (995 aa).

The first 23 residues, methionine 1–glycine 23, serve as a signal peptide directing secretion. Residues tyrosine 26–valine 253 form the Methyl-accepting transducer domain. Asparagine 28 and asparagine 35 each carry an N-linked (GlcNAc...) asparagine glycan. Positions serine 98–serine 276 are disordered. N-linked (GlcNAc...) asparagine glycans are attached at residues asparagine 468 and asparagine 664.

It belongs to the SRP1/TIP1 family.

Its subcellular location is the secreted. Its function is as follows. Secreted protein that may be involved in cell wall organization and biosynthesis. In Saccharomyces cerevisiae (strain ATCC 204508 / S288c) (Baker's yeast), this protein is Secreted protein CSS1.